Consider the following 171-residue polypeptide: Translation initiation factor IF-3 (171 aa).

The protein belongs to the IF-3 family. In terms of assembly, monomer.

The protein resides in the cytoplasm. IF-3 binds to the 30S ribosomal subunit and shifts the equilibrium between 70S ribosomes and their 50S and 30S subunits in favor of the free subunits, thus enhancing the availability of 30S subunits on which protein synthesis initiation begins. The sequence is that of Translation initiation factor IF-3 from Thermus thermophilus (strain ATCC BAA-163 / DSM 7039 / HB27).